The following is a 317-amino-acid chain: MLSCLLRNDKRLEVFFSALDMKKSYLLALSGGSDSLFLLYLLKSRGVSFTAVHVDYGWRESSYREAEELKLRCQEEGVPLIVDHVPSKYTTSKDPENTARRYRYALFCKICREDNLAGIFLAHHANDQAETVLKRVLEGASLGNLKGMTSGASYNRIPLLRPLLHIPKQVLMQTLDAENIAYVHDVTNTDERYLRARMRNKIFPWLEEIFAKNITQPLLTLAQDSEELSCYMKQQAQPFLENIRQEHTTWSIEIPKPLIEQVFLAKWVCKEFFYKVGIVVSRHFLQMVYDHLSRNLPAEMRLRDKRVIVKAGVVMIE.

30-35 (SGGSDS) provides a ligand contact to ATP.

This sequence belongs to the tRNA(Ile)-lysidine synthase family.

It is found in the cytoplasm. The enzyme catalyses cytidine(34) in tRNA(Ile2) + L-lysine + ATP = lysidine(34) in tRNA(Ile2) + AMP + diphosphate + H(+). In terms of biological role, ligates lysine onto the cytidine present at position 34 of the AUA codon-specific tRNA(Ile) that contains the anticodon CAU, in an ATP-dependent manner. Cytidine is converted to lysidine, thus changing the amino acid specificity of the tRNA from methionine to isoleucine. This Chlamydia abortus (strain DSM 27085 / S26/3) (Chlamydophila abortus) protein is tRNA(Ile)-lysidine synthase.